We begin with the raw amino-acid sequence, 413 residues long: MSVVEQAQRARTAAAALAVATRADKDAALHAMADALVARTSEILAANGADLAAGRDEGLSTAILDRLALDAGRVADIADALRQMAALPDPTGEVVRGSTLPNGLQLRQIRVPFGVVGIIYEARPNVTVDAAGICLKSGNAVLLRGSSSAARSNVALVSVLRDAVAGTGLPADSVQLLDATTRDSVKELMRARGLVDVLIPRGGAALIRTVVEEATVPVIETGVGNCHVYVDAAADVSKAVAIALNAKTQRLSTCNTAESLLVHTAVADAVLPPALAAFAAAGVTVHGCPQVARHSTAVLPATDEDYATEYLSADISVAVVESLDAAVAHIQRYGTGHTEAIVTDSQSAAREFVARVDAAAVMVNASTRFTDGGEFGFGAEIGISTQKLHARGPMGLPELTSTKYVVTGDGQLR.

Belongs to the gamma-glutamyl phosphate reductase family.

Its subcellular location is the cytoplasm. It catalyses the reaction L-glutamate 5-semialdehyde + phosphate + NADP(+) = L-glutamyl 5-phosphate + NADPH + H(+). The protein operates within amino-acid biosynthesis; L-proline biosynthesis; L-glutamate 5-semialdehyde from L-glutamate: step 2/2. Its function is as follows. Catalyzes the NADPH-dependent reduction of L-glutamate 5-phosphate into L-glutamate 5-semialdehyde and phosphate. The product spontaneously undergoes cyclization to form 1-pyrroline-5-carboxylate. The sequence is that of Gamma-glutamyl phosphate reductase from Salinispora tropica (strain ATCC BAA-916 / DSM 44818 / JCM 13857 / NBRC 105044 / CNB-440).